Reading from the N-terminus, the 690-residue chain is MDQDYKAHFKVFCSEVREWEKIHVVGSLPVLGEWNPRKSFPLTKSTDEENTFHAIVSVPSSIKEFNFRYIRVMYLDPSENNTSEPIMVLSKWETFNNARTCLIGVESQDGVARKNITDQFGSYSGKTQITDGWILNEKESVVYFRIHGEALKFFAKSYANKEYRLKVEPFDVRYSEMFSYTRKDITDRRGVWRHSSVYASMSIDGDDVVNLPTPSLPCFSNTDLSVLTREDPIFGDQYFNGSVFRNDQDYLVFRTRTVSLQNLAFRIEFYHGEKRCALSYVLPSSMSGTHGATVSPVIGLSSAPVGHINVNYMIVKRNKYTDQNLDIDSMKTTFGRYWRKRNRMLQIGHRGMGSSYTKNIGQRENTIFSLNEAARRGADYVEMDVQLTKDLKTVVYHDFHVLVAVAGRDSPSSTPTAAGENKSLHEIAIKDLTLAQLNLLHFEHISRANGSSAESPVALSVTPSKTETDELHVPFPSLAQVLRHVDENVGLNIEIKYPMYMQDGSHECQGYFEQNKFVDIILAEVAEHAGNRRIIFSCFEPDICTMITKKQHKYPVSFLVVGATNRYMPFQDIRSDCSKIAANFAAGCELLGVNFHSEELLIDQKPIEIAEKYGLIKFVWGDDLNSKEVQKHFRDEMNVDGLIFDRIGEDEVLKQNVFVVENHNRSSLFARSQHNSRSPSMSRRCMSTVE.

Residues Met1–Ser122 form the CBM20 domain. In terms of domain architecture, GP-PDE spans Met344–Lys654. A disordered region spans residues Ala670–Glu690. Low complexity predominate over residues Ser676–Glu690.

This sequence belongs to the glycerophosphoryl diester phosphodiesterase family.

The polypeptide is Putative glycerophosphocholine phosphodiesterase GPCPD1 homolog 1 (Caenorhabditis elegans).